A 388-amino-acid chain; its full sequence is Beta-1,4-galactosyltransferase 5 (388 aa).

Over 1-14 the chain is Cytoplasmic; the sequence is MRARRGLLRLPRRS. The chain crosses the membrane as a helical; Signal-anchor for type II membrane protein span at residues 15–35; it reads LLAALFFFSLSSSLLYFVYVA. Residues 36 to 388 lie on the Lumenal side of the membrane; that stretch reads PGIVNTYLFM…TPELAQVTEY (353 aa). N-linked (GlcNAc...) asparagine glycosylation is found at asparagine 77, asparagine 81, asparagine 90, and asparagine 128. Cysteines 114 and 158 form a disulfide. UDP-alpha-D-galactose contacts are provided by residues 169 to 173, 208 to 210, 235 to 236, tyrosine 264, and tryptophan 296; these read PFRNR, FNR, and VD. Residues cysteine 229 and cysteine 248 are joined by a disulfide bond. Residue aspartate 236 coordinates Mn(2+). 298–301 provides a ligand contact to N-acetyl-D-glucosamine; that stretch reads GEDD. Histidine 329 provides a ligand contact to Mn(2+). A UDP-alpha-D-galactose-binding site is contributed by 329 to 330; sequence HH. Arginine 340 provides a ligand contact to N-acetyl-D-glucosamine. 3 N-linked (GlcNAc...) asparagine glycosylation sites follow: asparagine 360, asparagine 364, and asparagine 373.

The protein belongs to the glycosyltransferase 7 family. Mn(2+) is required as a cofactor. Highest levels in heart, brain, liver and kidney with lower levels in spleen, lung and testis.

The protein resides in the golgi apparatus. It localises to the golgi stack membrane. The catalysed reaction is a beta-D-glucosyl-(1&lt;-&gt;1')-N-acylsphing-4-enine + UDP-alpha-D-galactose = a beta-D-Gal-(1-&gt;4)-beta-D-Glc-(1&lt;-&gt;1)-Cer(d18:1(4E)) + UDP + H(+). Its pathway is protein modification; protein glycosylation. It participates in sphingolipid metabolism. Its function is as follows. Catalyzes the synthesis of lactosylceramide (LacCer) via the transfer of galactose from UDP-galactose to glucosylceramide (GlcCer). LacCer is the starting point in the biosynthesis of all gangliosides (membrane-bound glycosphingolipids) which play pivotal roles in the CNS including neuronal maturation and axonal and myelin formation. Plays a role in the glycosylation of BMPR1A and regulation of its protein stability. Essential for extraembryonic development during early embryogenesis. The polypeptide is Beta-1,4-galactosyltransferase 5 (Mus musculus (Mouse)).